A 3003-amino-acid polypeptide reads, in one-letter code: MAX gene-associated protein (3003 aa).

Glycyl lysine isopeptide (Lys-Gly) (interchain with G-Cter in SUMO2) cross-links involve residues Lys-4 and Lys-178. A DNA-binding region (T-box) is located at residues 84-260; it reads MWNEFHNRST…YNPFAKGFRD (177 aa). The span at 259 to 277 shows a compositional bias: basic and acidic residues; it reads RDDGLSSKPQREGKQRNSS. Residues 259–290 are disordered; it reads RDDGLSSKPQREGKQRNSSDQEGNSVSSSPAH. Residues 278 to 288 show a composition bias toward polar residues; sequence DQEGNSVSSSP. Glycyl lysine isopeptide (Lys-Gly) (interchain with G-Cter in SUMO2) cross-links involve residues Lys-323, Lys-329, Lys-348, Lys-431, Lys-458, Lys-463, and Lys-480. Phosphoserine is present on Ser-531. Positions 553–647 are disordered; it reads ILDNSSTERI…NIPVGPGSTF (95 aa). Residue Lys-567 forms a Glycyl lysine isopeptide (Lys-Gly) (interchain with G-Cter in SUMO2) linkage. The segment covering 595–607 has biased composition (polar residues); sequence KTVTASHSASPNT. Ser-604 carries the post-translational modification Phosphoserine. Residues Lys-610, Lys-651, Lys-782, Lys-788, Lys-814, and Lys-823 each participate in a glycyl lysine isopeptide (Lys-Gly) (interchain with G-Cter in SUMO2) cross-link. Residues 610-621 show a composition bias toward basic residues; sequence KRGRPRKLRLSK. At Ser-848 the chain carries Phosphoserine. The span at 871–913 shows a compositional bias: polar residues; the sequence is KQSTISPSTSHSVKPQSVTTASRKTKAQNKQTTLSGRTKSSYK. Disordered regions lie at residues 871 to 946 and 967 to 987; these read KQST…TSDN and LRQAQQQHLQQQGTRPPGLSK. A Phosphoserine modification is found at Ser-921. Lys-925 participates in a covalent cross-link: Glycyl lysine isopeptide (Lys-Gly) (interchain with G-Cter in SUMO2). A compositionally biased stretch (polar residues) spans 937–946; it reads KNSLSSTSDN. The segment covering 969–978 has biased composition (low complexity); it reads QAQQQHLQQQ. Glycyl lysine isopeptide (Lys-Gly) (interchain with G-Cter in SUMO2) cross-links involve residues Lys-987 and Lys-1088. The disordered stretch occupies residues 1111 to 1130; sequence LGEEGREGGGVREDEEQLKE. Positions 1113–1122 are enriched in basic and acidic residues; that stretch reads EEGREGGGVR. Residues Lys-1136, Lys-1158, Lys-1194, and Lys-1202 each participate in a glycyl lysine isopeptide (Lys-Gly) (interchain with G-Cter in SUMO2) cross-link. Disordered regions lie at residues 1186–1215, 1246–1277, 1297–1323, and 1376–1424; these read QPDLSSTTKGKLTPGIKPARTYTPKPNPVI, QRQLSPPLSPSSSFQQQSSCYSSPENRVTKEL, SQEKSWKSSCNEGESSSTSYVHQRSPG, and RGEK…DISP. Composition is skewed to low complexity over residues 1248-1269 and 1303-1315; these read QLSPPLSPSSSFQQQSSCYSSP and KSSCNEGESSSTS. Phosphoserine occurs at positions 1423 and 1450. Glycyl lysine isopeptide (Lys-Gly) (interchain with G-Cter in SUMO2) cross-links involve residues Lys-1454 and Lys-1495. Disordered regions lie at residues 1476–1508, 1722–1746, 1856–1885, 1920–1954, 1964–1983, and 1988–2038; these read AKVAASRKPRTLLPSTSNSKMASSGPATNRSGK, PPVSQRPENAPQIPVTTPQISSNNV, ISPPETQNLASKTGSESKITPSTGGQPVGT, IKKESQSTDQKDETNSIKREEETKKALPSKDKALD, SGIIASENTSNNSLDDGGDL, and TLRE…AGSK. Polar residues-rich tracts occupy residues 1488 to 1507, 1735 to 1746, and 1859 to 1880; these read LPSTSNSKMASSGPATNRSG, PVTTPQISSNNV, and PETQNLASKTGSESKITPSTGG. Residues Lys-1937 and Lys-1944 each participate in a glycyl lysine isopeptide (Lys-Gly) (interchain with G-Cter in SUMO2) cross-link. The span at 1964-1976 shows a compositional bias: polar residues; the sequence is SGIIASENTSNNS. Residues Lys-2060 and Lys-2084 each participate in a glycyl lysine isopeptide (Lys-Gly) (interchain with G-Cter in SUMO2) cross-link. The disordered stretch occupies residues 2087-2110; it reads LSGNQVKEQQSNSQAEAKKDCEDS. Residues 2088–2101 are compositionally biased toward polar residues; the sequence is SGNQVKEQQSNSQA. Glycyl lysine isopeptide (Lys-Gly) (interchain with G-Cter in SUMO2) cross-links involve residues Lys-2104, Lys-2152, and Lys-2179. Position 2206 is an omega-N-methylarginine (Arg-2206). A disordered region spans residues 2207–2255; sequence GSRHFQGHLLLPREQMKPKQQTKDGRSSAADFTVLDLEDEDEEDEKTDD. Residues 2220-2232 show a composition bias toward basic and acidic residues; the sequence is EQMKPKQQTKDGR. A Glycyl lysine isopeptide (Lys-Gly) (interchain with G-Cter in SUMO2) cross-link involves residue Lys-2225. Residues 2242-2255 show a composition bias toward acidic residues; the sequence is DLEDEDEEDEKTDD. Residues Lys-2317, Lys-2352, Lys-2396, and Lys-2471 each participate in a glycyl lysine isopeptide (Lys-Gly) (interchain with G-Cter in SUMO2) cross-link. The 52-residue stretch at 2362–2413 folds into the bHLH domain; it reads YYRRTHTANERRRRGEMRDLFEKLKITLGLLHSSKVSKSLILNRAFSEIQGL. A Phosphoserine modification is found at Ser-2480. The disordered stretch occupies residues 2515-2534; it reads KRDQATENASPSDTPHSSAN. A compositionally biased stretch (polar residues) spans 2520–2534; that stretch reads TENASPSDTPHSSAN. Residues Lys-2568 and Lys-2618 each participate in a glycyl lysine isopeptide (Lys-Gly) (interchain with G-Cter in SUMO2) cross-link. The span at 2629–2651 shows a compositional bias: basic and acidic residues; that stretch reads SEASSLKDTERISSRGNHRDSRK. A disordered region spans residues 2629 to 2654; sequence SEASSLKDTERISSRGNHRDSRKALG. Lys-2724 participates in a covalent cross-link: Glycyl lysine isopeptide (Lys-Gly) (interchain with G-Cter in SUMO2). Residues Ser-2849 and Ser-2860 each carry the phosphoserine modification. Residues 2877–2917 are disordered; that stretch reads LVSHRKSSDGGQSTSGLPAEPESVSSPPILHMKTGPENSNT. A Glycyl lysine isopeptide (Lys-Gly) (interchain with G-Cter in SUMO2) cross-link involves residue Lys-2979.

Component of some MLL1/MLL complex, at least composed of the core components KMT2A/MLL1, ASH2L, HCFC1/HCF1, WDR5 and RBBP5, as well as the facultative components BACC1, CHD8, E2F6, HSP70, INO80C, KANSL1, LAS1L, MAX, MCRS1, MGA, MYST1/MOF, PELP1, PHF20, PRP31, RING2, RUVB1/TIP49A, RUVB2/TIP49B, SENP3, TAF1, TAF4, TAF6, TAF7, TAF9 and TEX10. Interacts with ZMYND11. Interacts with MAX. Requires heterodimerization with MAX for E-box binding. In terms of tissue distribution, highly expressed in germ cells and granulosa cells.

The protein localises to the nucleus. In terms of biological role, functions as a dual-specificity transcription factor, regulating the expression of both MAX-network and T-box family target genes. Functions as a repressor or an activator. Binds to 5'-AATTTCACACCTAGGTGTGAAATT-3' core sequence and seems to regulate MYC-MAX target genes. Suppresses transcriptional activation by MYC and inhibits MYC-dependent cell transformation. Function activated by heterodimerization with MAX. This heterodimerization serves the dual function of both generating an E-box-binding heterodimer and simultaneously blocking interaction of a corepressor. The chain is MAX gene-associated protein from Mus musculus (Mouse).